Consider the following 660-residue polypeptide: Bifunctional polymyxin resistance protein ArnA (660 aa).

The segment at 1-304 is formyltransferase ArnAFT; the sequence is MKAVVFAYHN…EMYLVEGMRF (304 aa). The active-site Proton donor; for formyltransferase activity is His-104. Residues Arg-114 and 136–140 contribute to the (6R)-10-formyltetrahydrofolate site; that span reads TVKPD. The segment at 316–660 is dehydrogenase ArnADH; the sequence is RRQKVLIMGA…FLKTAVEETK (345 aa). NAD(+) contacts are provided by residues Asp-349 and 370–371; that span reads DI. UDP-alpha-D-glucuronate-binding positions include Ala-395, Tyr-400, and 434 to 435; that span reads TS. Glu-436 acts as the Proton acceptor; for decarboxylase activity in catalysis. UDP-alpha-D-glucuronate is bound by residues Arg-462, Asn-494, 528-537, and Tyr-615; that span reads KLIDGGEQKR. The active-site Proton donor; for decarboxylase activity is the Arg-621.

This sequence in the N-terminal section; belongs to the Fmt family. UDP-L-Ara4N formyltransferase subfamily. In the C-terminal section; belongs to the NAD(P)-dependent epimerase/dehydratase family. UDP-glucuronic acid decarboxylase subfamily. In terms of assembly, homohexamer, formed by a dimer of trimers.

It carries out the reaction UDP-alpha-D-glucuronate + NAD(+) = UDP-beta-L-threo-pentopyranos-4-ulose + CO2 + NADH. The enzyme catalyses UDP-4-amino-4-deoxy-beta-L-arabinose + (6R)-10-formyltetrahydrofolate = UDP-4-deoxy-4-formamido-beta-L-arabinose + (6S)-5,6,7,8-tetrahydrofolate + H(+). It participates in nucleotide-sugar biosynthesis; UDP-4-deoxy-4-formamido-beta-L-arabinose biosynthesis; UDP-4-deoxy-4-formamido-beta-L-arabinose from UDP-alpha-D-glucuronate: step 1/3. It functions in the pathway nucleotide-sugar biosynthesis; UDP-4-deoxy-4-formamido-beta-L-arabinose biosynthesis; UDP-4-deoxy-4-formamido-beta-L-arabinose from UDP-alpha-D-glucuronate: step 3/3. The protein operates within bacterial outer membrane biogenesis; lipopolysaccharide biosynthesis. In terms of biological role, bifunctional enzyme that catalyzes the oxidative decarboxylation of UDP-glucuronic acid (UDP-GlcUA) to UDP-4-keto-arabinose (UDP-Ara4O) and the addition of a formyl group to UDP-4-amino-4-deoxy-L-arabinose (UDP-L-Ara4N) to form UDP-L-4-formamido-arabinose (UDP-L-Ara4FN). The modified arabinose is attached to lipid A and is required for resistance to polymyxin and cationic antimicrobial peptides. The polypeptide is Bifunctional polymyxin resistance protein ArnA (Shewanella sediminis (strain HAW-EB3)).